The sequence spans 590 residues: Negative elongation factor D (590 aa).

The interval 15-43 is disordered; that stretch reads FGSAAEWGDEADGGQQEDDYGEGEDDAEV. Acidic residues predominate over residues 21–43; sequence WGDEADGGQQEDDYGEGEDDAEV.

The protein belongs to the NELF-D family. The NELF complex is composed of NELFA, NELFB, NELFCD and NELFE; NELFA and NELFCD form a stable subcomplex that binds primarily through NELFCD to the N-terminus of NELFB. Binds RNA which may help to stabilize the NELF complex on nucleic acid. In vitro, the NELFA:NELFCD subcomplex binds to ssDNA and ssRNA in a sequence- and structure-dependent manner. Interacts with ARAF1. Interacts with PCF11. Interacts with NELFB. Interacts with KAT8.

The protein resides in the nucleus. In terms of biological role, essential component of the NELF complex, a complex that negatively regulates the elongation of transcription by RNA polymerase II. The NELF complex, which acts via an association with the DSIF complex and causes transcriptional pausing, is counteracted by the P-TEFb kinase complex. The sequence is that of Negative elongation factor D (NELFCD) from Sus scrofa (Pig).